A 200-amino-acid chain; its full sequence is ATP synthase subunit s, mitochondrial (200 aa).

The N-terminal 25 residues, 1-25, are a transit peptide targeting the mitochondrion; that stretch reads MMLFGKISQQLCGLKKLPWSRDSRY. The segment at 1 to 61 is N-terminal domain; the sequence is MMLFGKISQQ…SEWLLRCGAM (61 aa). Position 59 (G59) interacts with Mg(2+). 4 LRR repeats span residues 62 to 87, 88 to 116, 117 to 141, and 142 to 173; these read VRYHGQQRWQKDYNHLPTGPLDKYKI, QAIDATDSCIMSIGFDHMEGLQYVEKIRL, CKCHYIEDGCLERLSQLENLQKSML, and EMEIISCGNVTDKGIIALHHFRNLKYLFLSDL. A Mg(2+)-binding site is contributed by T93.

The protein belongs to the ATP synthase subunit s family. Homotetramer. Associates with ATP synthase.

It is found in the mitochondrion. It localises to the mitochondrion inner membrane. In terms of biological role, involved in regulation of mitochondrial membrane ATP synthase. Necessary for H(+) conduction of ATP synthase. Facilitates energy-driven catalysis of ATP synthesis by blocking a proton leak through an alternative proton exit pathway. The sequence is that of ATP synthase subunit s, mitochondrial (DMAC2L) from Bos taurus (Bovine).